The following is a 488-amino-acid chain: Protein nucleotidyltransferase YdiU (488 aa).

ATP-binding residues include Gly91, Gly93, Arg94, Lys114, Asp126, Gly127, Arg177, and Arg184. The disordered stretch occupies residues 108–127 (RFDIQLKGSGPTPYSRRGDG). The active-site Proton acceptor is the Asp253. Residues Asn254 and Asp263 each contribute to the Mg(2+) site. Residue Asp263 participates in ATP binding.

It belongs to the SELO family. It depends on Mg(2+) as a cofactor. The cofactor is Mn(2+).

It carries out the reaction L-seryl-[protein] + ATP = 3-O-(5'-adenylyl)-L-seryl-[protein] + diphosphate. It catalyses the reaction L-threonyl-[protein] + ATP = 3-O-(5'-adenylyl)-L-threonyl-[protein] + diphosphate. The catalysed reaction is L-tyrosyl-[protein] + ATP = O-(5'-adenylyl)-L-tyrosyl-[protein] + diphosphate. The enzyme catalyses L-histidyl-[protein] + UTP = N(tele)-(5'-uridylyl)-L-histidyl-[protein] + diphosphate. It carries out the reaction L-seryl-[protein] + UTP = O-(5'-uridylyl)-L-seryl-[protein] + diphosphate. It catalyses the reaction L-tyrosyl-[protein] + UTP = O-(5'-uridylyl)-L-tyrosyl-[protein] + diphosphate. In terms of biological role, nucleotidyltransferase involved in the post-translational modification of proteins. It can catalyze the addition of adenosine monophosphate (AMP) or uridine monophosphate (UMP) to a protein, resulting in modifications known as AMPylation and UMPylation. The protein is Protein nucleotidyltransferase YdiU of Bacillus cereus (strain AH820).